The following is a 1299-amino-acid chain: GRB10-interacting GYF protein 2 (1299 aa).

Ala-2 bears the N-acetylalanine mark. A phosphoserine mark is found at Ser-19, Ser-26, and Ser-30. The short motif at 40–50 (DYRYGREEMLA) is the 4EHP-binding motif element. Residues Arg-107, Arg-118, and Arg-120 each carry the omega-N-methylarginine modification. Positions 112–131 (TVVGAPRGRSSSRGRGRGRG) are disordered. Residue Ser-139 is modified to Phosphoserine. Disordered regions lie at residues 147 to 195 (FGRG…RKHE), 214 to 247 (EDED…GWRE), and 266 to 433 (RGYR…VADV). At Arg-149 the chain carries Omega-N-methylarginine. The span at 151 to 182 (GGREMHRSQSWEERGDRRFEKPGRKDVGRPNF) shows a compositional bias: basic and acidic residues. Phosphoserine occurs at positions 160, 189, and 236. Over residues 225–247 (SRRDGERWRPHSPDGPRSAGWRE) the composition is skewed to basic and acidic residues. A DDX6 binding motif motif is present at residues 280-310 (DDRDSLPEWCLEDAEEEMGTFDSSGAFLSLK). The span at 289–298 (CLEDAEEEMG) shows a compositional bias: acidic residues. Basic and acidic residues-rich tracts occupy residues 312–329 (VQKE…RPVD) and 338–363 (EGSH…DRVG). Polar residues predominate over residues 369-392 (ETPQTSSSSARPGTPSDHQSQEAS). A Phosphothreonine modification is found at Thr-382. Ser-388 carries the post-translational modification Phosphoserine. A compositionally biased stretch (basic and acidic residues) spans 393 to 414 (QFERKDEPKTEQTEKAEEETRM). The region spanning 533–581 (MQKWYYKDPQGEIQGPFNNQEMAEWFQAGYFTMSLLVKRACDESFQPLG) is the GYF domain. The required for GRB10-binding stretch occupies residues 547-563 (GPFNNQEMAEWFQAGYF). Ser-593 carries the post-translational modification Phosphoserine. Disordered regions lie at residues 733 to 793 (KAAK…QEEA), 845 to 866 (EEAA…ENRL), 872 to 891 (AARL…EVQR), 917 to 936 (QLAQ…SNTT), 957 to 997 (ERQL…KPSG), 1009 to 1048 (EARQ…VWGS), and 1084 to 1112 (KEVG…NRQN). The segment at 860 to 919 (RLEENRLRMEEEAARLRHEEEERKRKELEVQRQKELMRQRQQQQEALRRLQQQQQQQQLA) is required for interaction with SARS-CoV-2 non-structural protein 2 (nsp2). The segment covering 924 to 936 (PSSSTWGQQSNTT) has biased composition (polar residues). Basic and acidic residues predominate over residues 957–972 (ERQLREEQRRQQRELM). Residue Ser-993 is modified to Phosphoserine. Residues 1013–1025 (MQKQQQQQQQHQQ) are compositionally biased toward low complexity. Polar residues predominate over residues 1026–1048 (PNRARNNTHSNLHTSIGNSVWGS). Residues 1090–1104 (NSTNKNKNNASLSKS) are compositionally biased toward low complexity. Lys-1123 is covalently cross-linked (Glycyl lysine isopeptide (Lys-Gly) (interchain with G-Cter in SUMO2)). Disordered stretches follow at residues 1195-1230 (RAKQ…QQDS) and 1247-1271 (QSNN…KMVR). Positions 1202–1217 (QQRQQQQLPQQQQQQP) are enriched in low complexity. Position 1284 is a phosphoserine (Ser-1284).

Belongs to the GIGYF family. Component of the 4EHP-GYF2 complex, at least composed of EIF4E2, GIGYF2 and ZNF598. Interacts (via the 4EHP-binding motif) with EIF4E2; the interaction is direct. Interacts with ZFP36/TTP (via P-P-P-P-G repeats); the interaction is direct. Interacts with GRB10. Interacts (via DDX6 motif) with DDX6 (via RecA-like domain 2). As to quaternary structure, (Microbial infection) Interacts with SARS coronavirus-2/SARS-CoV-2 non-structural protein 2 (nsp2); the interaction enhances GIGYF2 binding to EIF4E2.

Its function is as follows. Key component of the 4EHP-GYF2 complex, a multiprotein complex that acts as a repressor of translation initiation. In the 4EHP-GYF2 complex, acts as a factor that bridges EIF4E2 to ZFP36/TTP, linking translation repression with mRNA decay. Also recruits and bridges the association of the 4EHP complex with the decapping effector protein DDX6, which is required for the ZFP36/TTP-mediated down-regulation of AU-rich mRNA. May act cooperatively with GRB10 to regulate tyrosine kinase receptor signaling, including IGF1 and insulin receptors. In association with EIF4E2, assists ribosome-associated quality control (RQC) by sequestering the mRNA cap, blocking ribosome initiation and decreasing the translational load on problematic messages. Part of a pathway that works in parallel to RQC-mediated degradation of the stalled nascent polypeptide. GIGYF2 and EIF4E2 work downstream and independently of ZNF598, which seems to work as a scaffold that can recruit them to faulty mRNA even if alternative recruitment mechanisms may exist. Functionally, (Microbial infection) Upon SARS coronavirus-2/SARS-CoV-2 infection, the interaction with non-structural protein 2 (nsp2) enhances GIGYF2 binding to EIF4E2 and increases repression of translation initiation of genes involved in antiviral innate immune response such as IFNB1. The polypeptide is GRB10-interacting GYF protein 2 (Homo sapiens (Human)).